We begin with the raw amino-acid sequence, 92 residues long: Small ribosomal subunit protein uS19 (92 aa).

This sequence belongs to the universal ribosomal protein uS19 family.

Functionally, protein S19 forms a complex with S13 that binds strongly to the 16S ribosomal RNA. This chain is Small ribosomal subunit protein uS19, found in Corynebacterium kroppenstedtii (strain DSM 44385 / JCM 11950 / CIP 105744 / CCUG 35717).